The primary structure comprises 1067 residues: Probable importin-5 homolog (1067 aa).

HEAT repeat units lie at residues 3–34 (LQPI…YKNH), 42–75 (SFIV…SGNI), 93–120 (FAVR…QLVP), 125–152 (PEIL…LIGA), 164–197 (APHF…STFI), 206–243 (VFKP…IAQY), 251–286 (NFDM…FAEF), 295–347 (LYLE…HCVS), 349–381 (GLWE…SSIS), 385–425 (EKQI…ASYL), 427–466 (REMQ…LDEI), 468–508 (PNRV…VDGI), 510–553 (EEFT…GLAV), 555–596 (KKVF…AQCL), 598–658 (EDFI…AMEL), 661–703 (HLFP…SKQH), 718–757 (FTSR…MDIG), 763–826 (ADRI…CIQF), 832–869 (PYIA…ENGG), 876–909 (YPHI…AAEN), 917–960 (FLME…ITNL), 969–999 (PQTI…TLIR), 1008–1040 (QQYI…LALR), and 1041–1064 (SQES…LANF).

This sequence belongs to the importin beta family. Importin beta-3 subfamily.

It localises to the cytoplasm. Its subcellular location is the nucleus. Functionally, functions in nuclear protein import as nuclear transport receptor. Serves as receptor for nuclear localization signals (NLS) in cargo substrates. This chain is Probable importin-5 homolog, found in Dictyostelium discoideum (Social amoeba).